A 422-amino-acid chain; its full sequence is tRNA hydroxylation protein P (422 aa).

The N-terminal stretch at 1-58 (MNQVELLSPAGNLKKLKIALNYGADAVYGGVSHFSLRNRAGKEFTLETFKEGIDYAHA) is a signal peptide.

It belongs to the peptidase U32 family.

Involved in prephenate-dependent formation of 5-hydroxyuridine (ho5U) modification at position 34 in tRNAs, the first step in 5-carboxymethoxyuridine (cmo5U) biosynthesis. In Helicobacter pylori (strain ATCC 700392 / 26695) (Campylobacter pylori), this protein is tRNA hydroxylation protein P.